The following is a 120-amino-acid chain: Large ribosomal subunit protein uL18 (120 aa).

Belongs to the universal ribosomal protein uL18 family. Part of the 50S ribosomal subunit; part of the 5S rRNA/L5/L18/L25 subcomplex. Contacts the 5S and 23S rRNAs.

Functionally, this is one of the proteins that bind and probably mediate the attachment of the 5S RNA into the large ribosomal subunit, where it forms part of the central protuberance. This is Large ribosomal subunit protein uL18 from Bacillus cytotoxicus (strain DSM 22905 / CIP 110041 / 391-98 / NVH 391-98).